The sequence spans 344 residues: GTP 3',8-cyclase (344 aa).

Positions 19–239 constitute a Radical SAM core domain; sequence PFGRTIDYLR…ANYTLTDLPD (221 aa). Residue Arg-28 coordinates GTP. 2 residues coordinate [4Fe-4S] cluster: Cys-35 and Cys-39. Residue Tyr-41 coordinates S-adenosyl-L-methionine. Cys-42 contributes to the [4Fe-4S] cluster binding site. Residue Arg-77 coordinates GTP. Residue Gly-81 participates in S-adenosyl-L-methionine binding. Position 111 (Thr-111) interacts with GTP. An S-adenosyl-L-methionine-binding site is contributed by Ser-135. Lys-171 serves as a coordination point for GTP. Met-205 lines the S-adenosyl-L-methionine pocket. Residues Cys-268 and Cys-271 each contribute to the [4Fe-4S] cluster site. 273–275 is a GTP binding site; the sequence is RVR. Cys-285 contacts [4Fe-4S] cluster.

It belongs to the radical SAM superfamily. MoaA family. As to quaternary structure, monomer and homodimer. It depends on [4Fe-4S] cluster as a cofactor.

It carries out the reaction GTP + AH2 + S-adenosyl-L-methionine = (8S)-3',8-cyclo-7,8-dihydroguanosine 5'-triphosphate + 5'-deoxyadenosine + L-methionine + A + H(+). Its pathway is cofactor biosynthesis; molybdopterin biosynthesis. Functionally, catalyzes the cyclization of GTP to (8S)-3',8-cyclo-7,8-dihydroguanosine 5'-triphosphate. The protein is GTP 3',8-cyclase of Rhodopseudomonas palustris (strain TIE-1).